The chain runs to 328 residues: Phosphatidylglycerol--prolipoprotein diacylglyceryl transferase (328 aa).

The next 3 helical transmembrane spans lie at 15-35 (VIQG…ILIS), 57-77 (IFMF…STLV), and 106-126 (GMAI…TINT). Position 156 (Arg-156) interacts with a 1,2-diacyl-sn-glycero-3-phospho-(1'-sn-glycerol). 2 helical membrane passes run 242–262 (GFIF…IEYL) and 289–309 (ISMG…WIIV).

The protein belongs to the Lgt family.

It localises to the cell inner membrane. The catalysed reaction is L-cysteinyl-[prolipoprotein] + a 1,2-diacyl-sn-glycero-3-phospho-(1'-sn-glycerol) = an S-1,2-diacyl-sn-glyceryl-L-cysteinyl-[prolipoprotein] + sn-glycerol 1-phosphate + H(+). Its pathway is protein modification; lipoprotein biosynthesis (diacylglyceryl transfer). In terms of biological role, catalyzes the transfer of the diacylglyceryl group from phosphatidylglycerol to the sulfhydryl group of the N-terminal cysteine of a prolipoprotein, the first step in the formation of mature lipoproteins. The polypeptide is Phosphatidylglycerol--prolipoprotein diacylglyceryl transferase (Borreliella burgdorferi (strain ZS7) (Borrelia burgdorferi)).